The following is a 130-amino-acid chain: uncharacterized protein (130 aa).

Belongs to the HesB/IscA family.

This is an uncharacterized protein from Buchnera aphidicola subsp. Acyrthosiphon pisum (strain APS) (Acyrthosiphon pisum symbiotic bacterium).